The sequence spans 360 residues: UDP-N-acetylglucosamine--N-acetylmuramyl-(pentapeptide) pyrophosphoryl-undecaprenol N-acetylglucosamine transferase (360 aa).

UDP-N-acetyl-alpha-D-glucosamine-binding positions include 12 to 14 (TAG), serine 198, and glutamine 289.

Belongs to the glycosyltransferase 28 family. MurG subfamily.

The protein localises to the cell membrane. It carries out the reaction Mur2Ac(oyl-L-Ala-gamma-D-Glu-L-Lys-D-Ala-D-Ala)-di-trans,octa-cis-undecaprenyl diphosphate + UDP-N-acetyl-alpha-D-glucosamine = beta-D-GlcNAc-(1-&gt;4)-Mur2Ac(oyl-L-Ala-gamma-D-Glu-L-Lys-D-Ala-D-Ala)-di-trans,octa-cis-undecaprenyl diphosphate + UDP + H(+). Its pathway is cell wall biogenesis; peptidoglycan biosynthesis. In terms of biological role, cell wall formation. Catalyzes the transfer of a GlcNAc subunit on undecaprenyl-pyrophosphoryl-MurNAc-pentapeptide (lipid intermediate I) to form undecaprenyl-pyrophosphoryl-MurNAc-(pentapeptide)GlcNAc (lipid intermediate II). The protein is UDP-N-acetylglucosamine--N-acetylmuramyl-(pentapeptide) pyrophosphoryl-undecaprenol N-acetylglucosamine transferase of Streptococcus equi subsp. equi (strain 4047).